A 631-amino-acid polypeptide reads, in one-letter code: Alpha-dioxygenase 2 (631 aa).

The first 20 residues, 1 to 20 (MGFSPSSSWFLHPQLHHVVS), serve as a signal peptide directing secretion. H157 contributes to the heme b binding site. The active-site Proton acceptor is Y378. Residue H381 participates in heme b binding. Residue N583 is glycosylated (N-linked (GlcNAc...) asparagine).

Belongs to the peroxidase family. Heme b serves as cofactor. Expressed in seedlings (cotyledons, young leaves, and hypocotyls), flowers, siliques and old leaves.

Functionally, alpha-dioxygenase that catalyzes the primary oxygenation of fatty acids into oxylipins. May be involved in the senescence process. This is Alpha-dioxygenase 2 (DOX2) from Arabidopsis thaliana (Mouse-ear cress).